Reading from the N-terminus, the 180-residue chain is ATP synthase subunit b 2 (180 aa).

The chain crosses the membrane as a helical span at residues 33–53 (IFWLLVTLVAIYFLLTRVALP).

The protein belongs to the ATPase B chain family. F-type ATPases have 2 components, F(1) - the catalytic core - and F(0) - the membrane proton channel. F(1) has five subunits: alpha(3), beta(3), gamma(1), delta(1), epsilon(1). F(0) has three main subunits: a(1), b(2) and c(10-14). The alpha and beta chains form an alternating ring which encloses part of the gamma chain. F(1) is attached to F(0) by a central stalk formed by the gamma and epsilon chains, while a peripheral stalk is formed by the delta and b chains.

It localises to the cell inner membrane. Functionally, f(1)F(0) ATP synthase produces ATP from ADP in the presence of a proton or sodium gradient. F-type ATPases consist of two structural domains, F(1) containing the extramembraneous catalytic core and F(0) containing the membrane proton channel, linked together by a central stalk and a peripheral stalk. During catalysis, ATP synthesis in the catalytic domain of F(1) is coupled via a rotary mechanism of the central stalk subunits to proton translocation. In terms of biological role, component of the F(0) channel, it forms part of the peripheral stalk, linking F(1) to F(0). The b'-subunit is a diverged and duplicated form of b found in plants and photosynthetic bacteria. The sequence is that of ATP synthase subunit b 2 (atpF2) from Cereibacter sphaeroides (strain ATCC 17029 / ATH 2.4.9) (Rhodobacter sphaeroides).